The sequence spans 227 residues: uncharacterized protein (227 aa).

Transmembrane regions (helical) follow at residues 7-24 (FVYAVLLVICYLVGVTWA) and 135-157 (VVVIIVIWIISILVIYMLFLMCL).

The protein belongs to the TMEM9 family.

The protein localises to the membrane. This is an uncharacterized protein from Drosophila melanogaster (Fruit fly).